Reading from the N-terminus, the 295-residue chain is Putative aquaporin-12B (295 aa).

The Cytoplasmic portion of the chain corresponds to 1-22; sequence MAGLNVSLSFFFATFTLCEAAR. The helical transmembrane segment at 23-41 threads the bilayer; that stretch reads RASKALLPVGAYEVFAREA. Topologically, residues 42–55 are extracellular; sequence MRTLVELGPWAGDF. A helical transmembrane segment spans residues 56–74; it reads GPDLLLTLLFLLFLAHGVT. At 75–76 the chain is on the cytoplasmic side; the sequence is LD. Positions 77–114 form an intramembrane region, discontinuously helical; sequence GASANPTVSLQEFLMAEESLPGTLLKLAAQGLGMQAAC. The NPA 1 signature appears at 81–83; the sequence is NPT. Residues 115 to 120 are Cytoplasmic-facing; that stretch reads TLTRLC. A helical membrane pass occupies residues 121–142; the sequence is WAWELSDLHLLQSLMAQSCSSA. Over 143–145 the chain is Extracellular; the sequence is LRT. The helical transmembrane segment at 146–166 threads the bilayer; that stretch reads SVPHGALVEAACAFCFHLTLL. Residues 167–174 lie on the Cytoplasmic side of the membrane; that stretch reads HLRHSPPA. A helical membrane pass occupies residues 175 to 191; sequence YSGPAVALLVTVTAYTA. The Extracellular portion of the chain corresponds to 192–194; that stretch reads GPF. The discontinuously helical intramembrane region spans 195–206; it reads TSAFFNPALAAS. Residues 200-202 carry the NPA 2 motif; that stretch reads NPA. Residues 207–223 are Extracellular-facing; sequence VTFACSGHTLLEYVQVY. Residues 224–244 form a helical membrane-spanning segment; it reads WLGPLTGMVLAVLLHQGRLPH. Residues 245–295 lie on the Cytoplasmic side of the membrane; that stretch reads LFQRNLFYGQKNKYRAPRGKPAPASGDTQTPAKGSSVREPGRSGVEGPHSS. The segment at 257–295 is disordered; sequence KYRAPRGKPAPASGDTQTPAKGSSVREPGRSGVEGPHSS.

It belongs to the MIP/aquaporin (TC 1.A.8) family. AQP11/AQP12 subfamily. In terms of assembly, homotetramer; each monomer provides an independent water pore.

It is found in the membrane. It carries out the reaction H2O(in) = H2O(out). In terms of biological role, putative aquaporin. Could form homotetrameric transmembrane channels, with each monomer independently mediating water transport across the plasma membrane along its osmotic gradient. This Homo sapiens (Human) protein is Putative aquaporin-12B.